The chain runs to 433 residues: Tol-Pal system protein TolB (433 aa).

The signal sequence occupies residues 1-21 (MINLFRGLLVVLCFASAMVAA).

Belongs to the TolB family. As to quaternary structure, the Tol-Pal system is composed of five core proteins: the inner membrane proteins TolA, TolQ and TolR, the periplasmic protein TolB and the outer membrane protein Pal. They form a network linking the inner and outer membranes and the peptidoglycan layer.

Its subcellular location is the periplasm. Its function is as follows. Part of the Tol-Pal system, which plays a role in outer membrane invagination during cell division and is important for maintaining outer membrane integrity. The polypeptide is Tol-Pal system protein TolB (Pseudomonas syringae pv. tomato (strain ATCC BAA-871 / DC3000)).